The chain runs to 385 residues: GTPase Obg (385 aa).

Positions 1 to 159 constitute an Obg domain; the sequence is MKFVDEATIL…REIQLELMLL (159 aa). Positions 160–333 constitute an OBG-type G domain; sequence ADVGMLGLPN…LCWDVMAFIN (174 aa). GTP is bound by residues 166 to 173, 191 to 195, 213 to 216, 283 to 286, and 314 to 316; these read GLPNAGKS, FTTLV, DIPG, NKAD, and SAA. 2 residues coordinate Mg(2+): Ser-173 and Thr-193. The span at 362–379 shows a compositional bias: acidic residues; the sequence is QQEEAEETLDDDWDEDGV. The segment at 362 to 385 is disordered; it reads QQEEAEETLDDDWDEDGVETIYQR.

This sequence belongs to the TRAFAC class OBG-HflX-like GTPase superfamily. OBG GTPase family. In terms of assembly, monomer. The cofactor is Mg(2+).

Its subcellular location is the cytoplasm. Its function is as follows. An essential GTPase which binds GTP, GDP and possibly (p)ppGpp with moderate affinity, with high nucleotide exchange rates and a fairly low GTP hydrolysis rate. Plays a role in control of the cell cycle, stress response, ribosome biogenesis and in those bacteria that undergo differentiation, in morphogenesis control. The polypeptide is GTPase Obg (Sodalis glossinidius (strain morsitans)).